A 159-amino-acid chain; its full sequence is Cyclic pyranopterin monophosphate synthase (159 aa).

Substrate contacts are provided by residues 76 to 78 and 114 to 115; these read LCH and ME. Asp-129 is a catalytic residue.

Belongs to the MoaC family. As to quaternary structure, homohexamer; trimer of dimers.

It carries out the reaction (8S)-3',8-cyclo-7,8-dihydroguanosine 5'-triphosphate = cyclic pyranopterin phosphate + diphosphate. Its pathway is cofactor biosynthesis; molybdopterin biosynthesis. Catalyzes the conversion of (8S)-3',8-cyclo-7,8-dihydroguanosine 5'-triphosphate to cyclic pyranopterin monophosphate (cPMP). This chain is Cyclic pyranopterin monophosphate synthase, found in Oleidesulfovibrio alaskensis (strain ATCC BAA-1058 / DSM 17464 / G20) (Desulfovibrio alaskensis).